The sequence spans 443 residues: Putative transporter AmpG 1 (443 aa).

The next 13 helical transmembrane spans lie at 5–25 (SHIYIIWLFGFISGFNVMITG), 42–62 (IGMLSFITLPYSINFLLAPVF), 78–98 (LSWICLTSTTLISLIFILSFL), 104–124 (LVLLSFIAFIISFFSAAQDTI), 143–163 (GIYILGYRVGMLLASSGAIYL), 171–191 (AIYKIFAGVIFVYLILLILVA), 230–250 (FNYFKNFISAYLLKIFSGFYF), 254–274 (DINLAYYIILILIFLVLYRLP), 299–319 (VCKFCGVMGAIIGGLIGGIIM), 324–344 (ILYSILLFGIIHALSHIFFIL), 354–374 (ILFITIGVESITGGMTMTAYI), 393–413 (LSSMMGISRSIFPIISGYMVV), and 415–435 (FGWQNFFLFTTIITIPSLLIL).

Belongs to the major facilitator superfamily.

It is found in the cell inner membrane. The polypeptide is Putative transporter AmpG 1 (ampG1) (Rickettsia prowazekii (strain Madrid E)).